The sequence spans 191 residues: Small ribosomal subunit protein eS7 (191 aa).

This sequence belongs to the eukaryotic ribosomal protein eS7 family.

The sequence is that of Small ribosomal subunit protein eS7 (RPS7) from Hordeum vulgare (Barley).